Here is a 122-residue protein sequence, read N- to C-terminus: Small ribosomal subunit protein uS13 (122 aa).

Residues Gly-95–Thr-116 show a composition bias toward basic residues. The segment at Gly-95 to Lys-122 is disordered.

The protein belongs to the universal ribosomal protein uS13 family. As to quaternary structure, part of the 30S ribosomal subunit. Forms a loose heterodimer with protein S19. Forms two bridges to the 50S subunit in the 70S ribosome.

Its function is as follows. Located at the top of the head of the 30S subunit, it contacts several helices of the 16S rRNA. In the 70S ribosome it contacts the 23S rRNA (bridge B1a) and protein L5 of the 50S subunit (bridge B1b), connecting the 2 subunits; these bridges are implicated in subunit movement. Contacts the tRNAs in the A and P-sites. The sequence is that of Small ribosomal subunit protein uS13 from Campylobacter curvus (strain 525.92).